The following is a 256-amino-acid chain: Large ribosomal subunit protein uL2 (256 aa).

Residues 208-230 (EHPHGGGNHQHIGKASTVKRGTS) form a disordered region.

This sequence belongs to the universal ribosomal protein uL2 family. In larvae tissues examined: gut, brain imaginal disk, salivary glands, fat body, muscles, epidermis and trachaea.

It is found in the cytoplasm. The chain is Large ribosomal subunit protein uL2 (RpL8) from Drosophila melanogaster (Fruit fly).